The following is a 264-amino-acid chain: [LysW]-aminoadipate/[LysW]-glutamate kinase (264 aa).

Substrate-binding positions include 35–36, Arg62, and Asn167; that span reads GG.

This sequence belongs to the acetylglutamate kinase family. LysZ subfamily.

The protein resides in the cytoplasm. The catalysed reaction is [amino-group carrier protein]-C-terminal-N-(1,4-dicarboxybutan-1-yl)-L-glutamine + ATP = [amino-group carrier protein]-C-terminal-N-(1-carboxy-5-phosphooxy-5-oxopentan-1-yl)-L-glutamine + ADP. It carries out the reaction [amino-group carrier protein]-C-terminal-gamma-(L-glutamyl)-L-glutamate + ATP = [amino-group carrier protein]-C-terminal-gamma-(5-phospho-L-glutamyl)-L-glutamate + ADP. It participates in amino-acid biosynthesis; L-lysine biosynthesis via AAA pathway; L-lysine from L-alpha-aminoadipate (Thermus route): step 2/5. It functions in the pathway amino-acid biosynthesis; L-arginine biosynthesis. Functionally, involved in both the arginine and lysine biosynthetic pathways. Phosphorylates the LysW-bound precursors glutamate (for arginine biosynthesis), respectively alpha-aminoadipate (for lysine biosynthesis). This Saccharolobus solfataricus (strain ATCC 35092 / DSM 1617 / JCM 11322 / P2) (Sulfolobus solfataricus) protein is [LysW]-aminoadipate/[LysW]-glutamate kinase.